Consider the following 690-residue polypeptide: Glycine--tRNA ligase beta subunit (690 aa).

The protein belongs to the class-II aminoacyl-tRNA synthetase family. As to quaternary structure, tetramer of two alpha and two beta subunits.

The protein localises to the cytoplasm. It catalyses the reaction tRNA(Gly) + glycine + ATP = glycyl-tRNA(Gly) + AMP + diphosphate. The chain is Glycine--tRNA ligase beta subunit from Syntrophus aciditrophicus (strain SB).